The chain runs to 212 residues: Large ribosomal subunit protein uL3 (212 aa).

The residue at position 153 (glutamine 153) is an N5-methylglutamine.

The protein belongs to the universal ribosomal protein uL3 family. As to quaternary structure, part of the 50S ribosomal subunit. Forms a cluster with proteins L14 and L19. Methylated by PrmB.

In terms of biological role, one of the primary rRNA binding proteins, it binds directly near the 3'-end of the 23S rRNA, where it nucleates assembly of the 50S subunit. The chain is Large ribosomal subunit protein uL3 from Shewanella pealeana (strain ATCC 700345 / ANG-SQ1).